Reading from the N-terminus, the 166-residue chain is Protein SprT (166 aa).

Residues R19–A164 form the SprT-like domain. H78 contacts Zn(2+). Residue E79 is part of the active site. H82 is a Zn(2+) binding site.

It belongs to the SprT family. Requires Zn(2+) as cofactor.

It localises to the cytoplasm. This Cronobacter sakazakii (strain ATCC BAA-894) (Enterobacter sakazakii) protein is Protein SprT.